The sequence spans 107 residues: Potassium voltage-gated channel subfamily E member 3 (107 aa).

Asn-5, Asn-22, and Asn-45 each carry an N-linked (GlcNAc...) asparagine glycan. The segment at 31-54 (CRPGPGPGSGTGPDNQTEDHRASL) is disordered. Residues 61–81 (SYMYILFVMFLFAVTVGSLIL) traverse the membrane as a helical segment. Positions 72–83 (FAVTVGSLILGY) are interaction with KCNQ1. Residues 82–103 (GYTRSRKVDKRSDPYHVYIKNR) lie on the Cytoplasmic side of the membrane.

This sequence belongs to the potassium channel KCNE family. Interacts with KCNB1. Interacts with KCNC2. Associates with KCNC4/Kv3.4. Interacts with KCNQ1; associates with a KCNQ1:KCNE3 stoichiometry of 4:4; produces a current with nearly instantaneous activation with a linear current-voltage relationship and alters membrane raft localization; affects KCNQ1 structure and gating properties.

It localises to the cell membrane. It is found in the cytoplasm. Its subcellular location is the perikaryon. The protein resides in the cell projection. The protein localises to the dendrite. It localises to the membrane raft. Ancillary protein that functions as a regulatory subunit of the voltage-gated potassium (Kv) channel complex composed of pore-forming and potassium-conducting alpha subunits and of regulatory beta subunits. KCNE3 beta subunit modulates the gating kinetics and enhances stability of the channel complex. Alters the gating of the delayed rectifier Kv channel containing KCNB1 alpha subunit. Associates with KCNC4/Kv3.4 alpha subunit to form the subthreshold Kv channel in skeletal muscle and to establish the resting membrane potential (RMP) in muscle cells. Association with KCNQ1/KCLQT1 alpha subunit may form the intestinal cAMP-stimulated potassium channel involved in chloride secretion that produces a current with nearly instantaneous activation with a linear current-voltage relationship. The polypeptide is Potassium voltage-gated channel subfamily E member 3 (Rattus norvegicus (Rat)).